Consider the following 363-residue polypeptide: Protein-glutamate methylesterase/protein-glutamine glutaminase of group 3 operon (363 aa).

Residues 7–124 (RVLIVDDSAS…RQALMESSGR (118 aa)) form the Response regulatory domain. A 4-aspartylphosphate modification is found at D58. The region spanning 166 to 357 (PTTERIVCIG…REIMAWQQAK (192 aa)) is the CheB-type methylesterase domain. Catalysis depends on residues S177, H203, and D299.

It belongs to the CheB family. Post-translationally, phosphorylated by CheA. Phosphorylation of the N-terminal regulatory domain activates the methylesterase activity.

The protein resides in the cytoplasm. The enzyme catalyses [protein]-L-glutamate 5-O-methyl ester + H2O = L-glutamyl-[protein] + methanol + H(+). It catalyses the reaction L-glutaminyl-[protein] + H2O = L-glutamyl-[protein] + NH4(+). In terms of biological role, involved in chemotaxis. Part of a chemotaxis signal transduction system that modulates chemotaxis in response to various stimuli. Catalyzes the demethylation of specific methylglutamate residues introduced into the chemoreceptors (methyl-accepting chemotaxis proteins or MCP) by CheR. Also mediates the irreversible deamidation of specific glutamine residues to glutamic acid. This is Protein-glutamate methylesterase/protein-glutamine glutaminase of group 3 operon from Rhodopseudomonas palustris (strain ATCC BAA-98 / CGA009).